The chain runs to 261 residues: Intermembrane phospholipid transport system permease protein MlaE (261 aa).

At M1–Q12 the chain is on the cytoplasmic side. The helical transmembrane segment at V13 to G33 threads the bilayer. The Periplasmic segment spans residues K34 to H49. A helical membrane pass occupies residues V50 to L70. Over G71–R147 the chain is Cytoplasmic. The helical transmembrane segment at F148 to W168 threads the bilayer. The Periplasmic segment spans residues G169–D198. The helical transmembrane segment at I199–F219 threads the bilayer. Topologically, residues N220–T238 are cytoplasmic. A helical transmembrane segment spans residues V239 to G259. The Periplasmic portion of the chain corresponds to A260–G261.

The protein belongs to the MlaE permease family. In terms of assembly, the complex is composed of two ATP-binding proteins (MlaF), two transmembrane proteins (MlaE), two cytoplasmic solute-binding proteins (MlaB) and six periplasmic solute-binding proteins (MlaD).

The protein localises to the cell inner membrane. In terms of biological role, part of the ABC transporter complex MlaFEDB, which is involved in a phospholipid transport pathway that maintains lipid asymmetry in the outer membrane by retrograde trafficking of phospholipids from the outer membrane to the inner membrane. Probably responsible for the translocation of the substrate across the membrane. The sequence is that of Intermembrane phospholipid transport system permease protein MlaE from Haemophilus influenzae (strain ATCC 51907 / DSM 11121 / KW20 / Rd).